The chain runs to 421 residues: MRYYRITIIRFINKYTKIMDWIESDSYLKGIINNKPKLHDPVRVASFDLDDTLIVRSKKTQKWKLVDSSIKQKIAELIENKYIIIVFTNQGGMSLNKKFDKPLWRKAMDDLVKILTSETDNDFYFAIYVAKKYDIYRKPNIGLWNLMKQDIKDEFNLDSVQISTKSFFCGDAAGRIYPSMFKKKLYPTSKGGDFSDTDRKFALNIGIKFLTPEEFYLDSKNSENLKTNYKLSGVNPTEIIDEIENTKLVNYKFKPRKKEMIVMIGQPGSGKSFFVKNYILPNGYVHINQDKCKTKAKCLSETENALSKGKSVVIDNTNPDVISRMTYTNLAKENNYDHVRAIIMETPDELAKHLNNVRHIYSSGTVPKVTDIAYNIYRKNFVLPQYEENFDKIETVTFYFDKSMLDDPKWKRSFMKFSEYK.

The tract at residues 25–231 (DSYLKGIINN…SENLKTNYKL (207 aa)) is phosphatase. Positions 235-415 (NPTEIIDEIE…DDPKWKRSFM (181 aa)) are kinase. An ATP-binding site is contributed by 265–272 (GQPGSGKS).

In the N-terminal section; belongs to the DNA 3' phosphatase family.

It catalyses the reaction a 3'end (2'-deoxyribonucleotide 3'-phosphate)-DNA + H2O = a 3'-end 2'-deoxyribonucleotide-DNA + phosphate. It carries out the reaction a 5'-end dephospho-2'-deoxyribonucleoside-DNA + ATP = a 5'-end 5'-phospho-2'-deoxyribonucleoside-DNA + ADP + H(+). The sequence is that of Putative bifunctional polynucleotide phosphatase/kinase from Acanthamoeba polyphaga mimivirus (APMV).